The following is a 377-amino-acid chain: Phospho-N-acetylmuramoyl-pentapeptide-transferase (377 aa).

The next 11 helical transmembrane spans lie at 9 to 29, 59 to 79, 85 to 105, 122 to 142, 155 to 175, 178 to 198, 210 to 230, 247 to 267, 274 to 294, 299 to 319, and 354 to 374; these read YITLRAVLACATALLIGLVAG, TPTMGGALILIAIAISTLLWA, FVWVVLLVTFGFGWIGWMDDY, FFWQATIGLVAAVYLAFAVSA, WVGSGFTMPLPTRADLIVPFF, VSYPLGVLGFVALTWAVIVGT, GLAIMPTVMVGSALGIFAYVV, AAELMVLCAAIGGAGLAFLWF, VFMGDVGALALGGALGTIAVI, IVLFIMGGVFVVETLSVMVQV, and QVVVRFWIITMMLVLVGLSTL.

Belongs to the glycosyltransferase 4 family. MraY subfamily. Requires Mg(2+) as cofactor.

The protein localises to the cell inner membrane. The catalysed reaction is UDP-N-acetyl-alpha-D-muramoyl-L-alanyl-gamma-D-glutamyl-meso-2,6-diaminopimeloyl-D-alanyl-D-alanine + di-trans,octa-cis-undecaprenyl phosphate = di-trans,octa-cis-undecaprenyl diphospho-N-acetyl-alpha-D-muramoyl-L-alanyl-D-glutamyl-meso-2,6-diaminopimeloyl-D-alanyl-D-alanine + UMP. It functions in the pathway cell wall biogenesis; peptidoglycan biosynthesis. Its function is as follows. Catalyzes the initial step of the lipid cycle reactions in the biosynthesis of the cell wall peptidoglycan: transfers peptidoglycan precursor phospho-MurNAc-pentapeptide from UDP-MurNAc-pentapeptide onto the lipid carrier undecaprenyl phosphate, yielding undecaprenyl-pyrophosphoryl-MurNAc-pentapeptide, known as lipid I. The sequence is that of Phospho-N-acetylmuramoyl-pentapeptide-transferase from Bordetella bronchiseptica (strain ATCC BAA-588 / NCTC 13252 / RB50) (Alcaligenes bronchisepticus).